The chain runs to 762 residues: Endothelin-converting enzyme 1 (762 aa).

Topologically, residues 1 to 60 are cytoplasmic; it reads MGSLRPPQGLGLQWSSFFLGKKGPGLTVSLPLLASSLQVNFRSPRSGQRCWAARTSVEKR. A helical; Signal-anchor for type II membrane protein transmembrane segment spans residues 61-81; that stretch reads LVVLVTLLAAGLVACLAALGI. The Extracellular portion of the chain corresponds to 82-762; it reads QYRTRTPPVC…MNPRHKCEVW (681 aa). One can recognise a Peptidase M13 domain in the interval 90–762; it reads VCLTEACVSV…MNPRHKCEVW (673 aa). Cystine bridges form between cysteine 91-cysteine 96, cysteine 114-cysteine 747, cysteine 122-cysteine 707, cysteine 177-cysteine 427, and cysteine 636-cysteine 759. Residues asparagine 158, asparagine 179, asparagine 202, asparagine 262, asparagine 308, asparagine 354, asparagine 375, and asparagine 531 are each glycosylated (N-linked (GlcNAc...) asparagine). Residue histidine 599 participates in Zn(2+) binding. Glutamate 600 is a catalytic residue. Histidine 603 lines the Zn(2+) pocket. Asparagine 624 and asparagine 643 each carry an N-linked (GlcNAc...) asparagine glycan. Residue glutamate 659 participates in Zn(2+) binding. The active-site Proton donor is aspartate 663.

This sequence belongs to the peptidase M13 family. In terms of assembly, homodimer; disulfide-linked. Interacts with PPP1R16B. Interacts with TSPAN8; this interaction recruits the endothelin converting enzyme ECE1 to tetraspanin-enriched microdomains and positively modulates its enzymatic activity. The cofactor is Zn(2+). All isoforms are expressed in aortic endothelial cells. Isoform A is also expressed in liver; isoform B in smooth muscle cells and fibroblasts; isoform C in aortic endothelial cells, smooth muscle cells, fibroblasts, liver and lung, and isoform D in smooth muscle cells.

It is found in the cell membrane. The enzyme catalyses Hydrolysis of the 21-Trp-|-Val-22 bond in big endothelin to form endothelin 1.. With respect to regulation, inhibited by phosphoramidon. Its function is as follows. Converts big endothelin-1 to endothelin-1. This is Endothelin-converting enzyme 1 (Ece1) from Rattus norvegicus (Rat).